The sequence spans 1258 residues: uncharacterized protein (1258 aa).

One copy of the WD 1 repeat lies at 55 to 93; sequence ELASEILGVCWQENGVLAAGISEGTWKRFLAGKQAINAE. The span at 112–128 shows a compositional bias: basic and acidic residues; that stretch reads GGRTKERKDTGTSRQEK. The segment at 112–138 is disordered; the sequence is GGRTKERKDTGTSRQEKFLSSSHPHTD. WD repeat units follow at residues 640–679, 682–721, 724–763, 766–807, 809–849, 850–889, 892–931, 934–975, 976–1017, 1019–1059, 1060–1101, 1103–1143, 1144–1183, and 1186–1227; these read ETLG…LLLI, GHSN…CIKT, GHEH…CLQT, GHTD…RTLK, HTGW…KTYI, GHTN…CIKT, GHTN…CLKA, GNTD…SSLE, GHTD…QILL, HTDW…KTLS, EHSD…GILR, HSNR…KTLT, GHTN…CHHI, and GHTH…QILR.

This is an uncharacterized protein from Nostoc sp. (strain PCC 7120 / SAG 25.82 / UTEX 2576).